We begin with the raw amino-acid sequence, 230 residues long: dITP/XTP pyrophosphatase (230 aa).

Position 7 to 12 (7 to 12 (STNPGK)) interacts with substrate. 2 residues coordinate Mg(2+): Glu-41 and Asp-70. The active-site Proton acceptor is the Asp-70. Substrate contacts are provided by residues Ser-71, 181–184 (FGYD), Lys-205, and 210–211 (HR).

The protein belongs to the HAM1 NTPase family. Homodimer. The cofactor is Mg(2+).

The catalysed reaction is XTP + H2O = XMP + diphosphate + H(+). It catalyses the reaction dITP + H2O = dIMP + diphosphate + H(+). The enzyme catalyses ITP + H2O = IMP + diphosphate + H(+). In terms of biological role, pyrophosphatase that catalyzes the hydrolysis of nucleoside triphosphates to their monophosphate derivatives, with a high preference for the non-canonical purine nucleotides XTP (xanthosine triphosphate), dITP (deoxyinosine triphosphate) and ITP. Seems to function as a house-cleaning enzyme that removes non-canonical purine nucleotides from the nucleotide pool, thus preventing their incorporation into DNA/RNA and avoiding chromosomal lesions. The protein is dITP/XTP pyrophosphatase of Anaeromyxobacter sp. (strain Fw109-5).